Consider the following 272-residue polypeptide: MTLKKLNLHLVSDSSGETVISVAKSALKHFRSIETVEYVWSFVKEEEQIDKILEEINKKSNEHNFVICTITNDKLRKYLKDNCVKLKIPYRAILSHIMREISSYLEIEKDEKFDLHTEINNEYFQRIEAINYTINHDDGQNIQDIDKSDIILIGVSRTSKSPTSMYLAYRGYKVANIPFVGEIPFYFDLAKLKDKLTIGLTIDVNRLVEIRKNRLTSINNEDNSIYADPKKVEKEIKKAEELFKQNNWPIIDVTQKSIEEVSATIIQYFNRM.

154-161 (GVSRTSKS) serves as a coordination point for ADP.

Belongs to the pyruvate, phosphate/water dikinase regulatory protein family. PDRP subfamily.

The catalysed reaction is N(tele)-phospho-L-histidyl/L-threonyl-[pyruvate, phosphate dikinase] + ADP = N(tele)-phospho-L-histidyl/O-phospho-L-threonyl-[pyruvate, phosphate dikinase] + AMP + H(+). It carries out the reaction N(tele)-phospho-L-histidyl/O-phospho-L-threonyl-[pyruvate, phosphate dikinase] + phosphate + H(+) = N(tele)-phospho-L-histidyl/L-threonyl-[pyruvate, phosphate dikinase] + diphosphate. In terms of biological role, bifunctional serine/threonine kinase and phosphorylase involved in the regulation of the pyruvate, phosphate dikinase (PPDK) by catalyzing its phosphorylation/dephosphorylation. This chain is Putative pyruvate, phosphate dikinase regulatory protein, found in Wolbachia sp. subsp. Brugia malayi (strain TRS).